The primary structure comprises 528 residues: Proteinaceous RNase P 2 (528 aa).

A compositionally biased stretch (basic and acidic residues) spans 1 to 16; the sequence is MAASDQHRSRRHDESS. The tract at residues 1–28 is disordered; the sequence is MAASDQHRSRRHDESSSRPNKKKKVSRN. PPR repeat units lie at residues 29–64, 72–107, 108–142, and 145–179; these read PETN…EVRL, LLYL…GISP, NEAS…GGVS, and RLRT…GIAL. Residues 275 to 511 form the PRORP domain; that stretch reads VSSTGRCLSC…NEESSRTWMC (237 aa). C281 and C284 together coordinate Zn(2+). D343, D421, D422, and D440 together coordinate Mg(2+). The Zn(2+) site is built by H494 and C511.

Belongs to the PPR family. P subfamily. Monomer; forms dimers in crystallo but monomers in solution. Mg(2+) serves as cofactor.

It localises to the nucleus. It carries out the reaction Endonucleolytic cleavage of RNA, removing 5'-extranucleotides from tRNA precursor.. In terms of biological role, endonuclease RNase P responsible for the 5' maturation of tRNA precursors. Preferentially binds precursor tRNAs containing short 5' leaders and 3' trailers. Also involved in the maturation of mRNA and small nucleolar RNA (snoRNA). The sequence is that of Proteinaceous RNase P 2 (PRORP2) from Arabidopsis thaliana (Mouse-ear cress).